Here is a 98-residue protein sequence, read N- to C-terminus: NADH-ubiquinone oxidoreductase chain 4L (98 aa).

3 helical membrane passes run 1 to 21, 28 to 48, and 59 to 79; these read MTSI…GVLI, STLL…ALLI, and APII…ALLV.

It belongs to the complex I subunit 4L family. Core subunit of respiratory chain NADH dehydrogenase (Complex I) which is composed of 45 different subunits.

The protein localises to the mitochondrion inner membrane. It carries out the reaction a ubiquinone + NADH + 5 H(+)(in) = a ubiquinol + NAD(+) + 4 H(+)(out). Functionally, core subunit of the mitochondrial membrane respiratory chain NADH dehydrogenase (Complex I) which catalyzes electron transfer from NADH through the respiratory chain, using ubiquinone as an electron acceptor. Part of the enzyme membrane arm which is embedded in the lipid bilayer and involved in proton translocation. This chain is NADH-ubiquinone oxidoreductase chain 4L (MT-ND4L), found in Trichosurus vulpecula (Brush-tailed possum).